Reading from the N-terminus, the 85-residue chain is Homeobox protein knotted-1-like 4 (85 aa).

Residues 1 to 21 enclose the ELK domain; it reads ELKYQLLKKYSGYLSSLRQEF. The homeobox; TALE-type DNA-binding region spans 22–85; the sequence is SKKKKKGKLP…NQRKRHWKPS (64 aa).

Belongs to the TALE/KNOX homeobox family. In terms of tissue distribution, strongly expressed in ear inflorescence primordia and shoot meristem. Weakly expressed in embryos. Absent from leaves.

The protein localises to the nucleus. Its function is as follows. Probably binds to the DNA sequence 5'-TGAC-3'. The polypeptide is Homeobox protein knotted-1-like 4 (KNOX4) (Zea mays (Maize)).